A 404-amino-acid polypeptide reads, in one-letter code: MSYSCGLPNLSCRTSCSSRPCVPPSCHGCTLPGACNIPANVSNCNWFCEGSFNGSEKETMQFLNDRLASYLEKVRQLERDNAELENLIRERSQQQEPLVCASYQSYFKTIEELQQKILCTKSENARLVVQIDNAKLASDDFRTKYETELSLRQLVESDINGLRRILDELTLCRSDLEAQVESLKEELLCLKQNHEQEVNTLRCQLGGRLNVEVDAAPAVDLNQVLNETRSQYEALVETNRREVEQWFATQTEELNKQVVSSSEQLQSYQVEIIELRRTVNALEIELQAQHNLRDSLENTLTESEARYSSQLSQVQRLITNVESQLAEIRSDLERQNQEYQVLLDVRARLECEINTYRSLLESEDCKLPSNPCAITNACDKSTGPCISNPCGPRARCGPCNTFGY.

The tract at residues 1–56 is head; it reads MSYSCGLPNLSCRTSCSSRPCVPPSCHGCTLPGACNIPANVSNCNWFCEGSFNGSE. The 312-residue stretch at 56-367 folds into the IF rod domain; that stretch reads EKETMQFLND…SLLESEDCKL (312 aa). The tract at residues 57-91 is coil 1A; it reads KETMQFLNDRLASYLEKVRQLERDNAELENLIRER. The interval 92–102 is linker 1; it reads SQQQEPLVCAS. The interval 103-203 is coil 1B; sequence YQSYFKTIEE…HEQEVNTLRC (101 aa). The segment at 204-219 is linker 12; sequence QLGGRLNVEVDAAPAV. A coil 2 region spans residues 220–363; that stretch reads DLNQVLNETR…NTYRSLLESE (144 aa). Positions 364-404 are tail; the sequence is DCKLPSNPCAITNACDKSTGPCISNPCGPRARCGPCNTFGY.

The protein belongs to the intermediate filament family.

The sequence is that of Keratin, type I cuticular Ha3-I from Pan troglodytes (Chimpanzee).